The primary structure comprises 677 residues: AP-2 complex subunit beta (677 aa).

Positions 597-677 are disordered; that stretch reads RLRTRDSNPS…PMTPETHLMD (81 aa). The segment covering 616–627 has biased composition (basic residues); that stretch reads KKYNHFHQKSQT. The span at 636–654 shows a compositional bias: polar residues; sequence RNSWNPSPFSDESNSNTFS.

Belongs to the adaptor complexes large subunit family. Adaptor protein complex 2 (AP-2) is a heterotetramer composed of two large adaptins (alpha-type subunit apl3 and beta-type subunit apl1), a medium chain (mu-type subunit apm4) and a small adaptin (sigma-type subunit aps2).

The protein localises to the cell membrane. Its subcellular location is the membrane. It localises to the coated pit. Adaptins are components of the adaptor complexes which link clathrin to receptors in coated vesicles. Clathrin-associated protein complexes are believed to interact with the cytoplasmic tails of membrane proteins, leading to their selection and concentration. Beta adaptin is a subunit of the plasma membrane adaptor. The sequence is that of AP-2 complex subunit beta (apl1) from Schizosaccharomyces pombe (strain 972 / ATCC 24843) (Fission yeast).